The following is a 420-amino-acid chain: UDP-N-acetyl-D-mannosamine dehydrogenase (420 aa).

Residues Y13, I14, D33, T85, and T126 each coordinate NAD(+). Residues R160, V161, K212, N216, R219, H250, R252, and G263 each coordinate UDP-N-acetyl-alpha-D-mannosaminouronate. The active-site Proton donor/acceptor is the K212. C266 functions as the Nucleophile in the catalytic mechanism. Residues F330 and K331 each contribute to the UDP-N-acetyl-alpha-D-mannosaminouronate site. R338 contacts NAD(+). Residue K416 coordinates UDP-N-acetyl-alpha-D-mannosaminouronate.

Belongs to the UDP-glucose/GDP-mannose dehydrogenase family. WecC subfamily. Homodimer.

It carries out the reaction UDP-N-acetyl-alpha-D-mannosamine + 2 NAD(+) + H2O = UDP-N-acetyl-alpha-D-mannosaminouronate + 2 NADH + 3 H(+). The protein operates within bacterial outer membrane biogenesis; enterobacterial common antigen biosynthesis. In terms of biological role, catalyzes the four-electron oxidation of UDP-N-acetyl-D-mannosamine (UDP-ManNAc), reducing NAD(+) and releasing UDP-N-acetylmannosaminuronic acid (UDP-ManNAcA). This chain is UDP-N-acetyl-D-mannosamine dehydrogenase, found in Yersinia pestis.